The chain runs to 150 residues: Putative esterase SSO1253 (150 aa).

Belongs to the thioesterase PaaI family.

This chain is Putative esterase SSO1253, found in Saccharolobus solfataricus (strain ATCC 35092 / DSM 1617 / JCM 11322 / P2) (Sulfolobus solfataricus).